The following is a 247-amino-acid chain: Cell division protein ZapD (247 aa).

This sequence belongs to the ZapD family. As to quaternary structure, interacts with FtsZ.

It localises to the cytoplasm. Cell division factor that enhances FtsZ-ring assembly. Directly interacts with FtsZ and promotes bundling of FtsZ protofilaments, with a reduction in FtsZ GTPase activity. This Shigella boydii serotype 18 (strain CDC 3083-94 / BS512) protein is Cell division protein ZapD.